The chain runs to 385 residues: Alkanesulfonate monooxygenase 2 (385 aa).

This sequence belongs to the SsuD family.

The enzyme catalyses an alkanesulfonate + FMNH2 + O2 = an aldehyde + FMN + sulfite + H2O + 2 H(+). Its function is as follows. Catalyzes the desulfonation of aliphatic sulfonates. In Mesorhizobium japonicum (strain LMG 29417 / CECT 9101 / MAFF 303099) (Mesorhizobium loti (strain MAFF 303099)), this protein is Alkanesulfonate monooxygenase 2 (ssuD2).